The primary structure comprises 185 residues: Small ribosomal subunit protein uS7 (185 aa).

It belongs to the universal ribosomal protein uS7 family. Part of the 30S ribosomal subunit.

Its function is as follows. One of the primary rRNA binding proteins, it binds directly to 16S rRNA where it nucleates assembly of the head domain of the 30S subunit. Is located at the subunit interface close to the decoding center. This is Small ribosomal subunit protein uS7 from Methanothrix thermoacetophila (strain DSM 6194 / JCM 14653 / NBRC 101360 / PT) (Methanosaeta thermophila).